Consider the following 918-residue polypeptide: Isoleucine--tRNA ligase 1 (918 aa).

The 'HIGH' region motif lies at 57–67; sequence PYANGDIHIGH. L-isoleucyl-5'-AMP is bound at residue glutamate 553. The 'KMSKS' region signature appears at 594-598; the sequence is KMSKS. Lysine 597 contributes to the ATP binding site. Zn(2+)-binding residues include cysteine 885, cysteine 888, cysteine 905, and cysteine 908.

The protein belongs to the class-I aminoacyl-tRNA synthetase family. IleS type 1 subfamily. As to quaternary structure, monomer. Zn(2+) is required as a cofactor.

It localises to the cytoplasm. The enzyme catalyses tRNA(Ile) + L-isoleucine + ATP = L-isoleucyl-tRNA(Ile) + AMP + diphosphate. Its function is as follows. Catalyzes the attachment of isoleucine to tRNA(Ile). As IleRS can inadvertently accommodate and process structurally similar amino acids such as valine, to avoid such errors it has two additional distinct tRNA(Ile)-dependent editing activities. One activity is designated as 'pretransfer' editing and involves the hydrolysis of activated Val-AMP. The other activity is designated 'posttransfer' editing and involves deacylation of mischarged Val-tRNA(Ile). The chain is Isoleucine--tRNA ligase 1 from Oceanobacillus iheyensis (strain DSM 14371 / CIP 107618 / JCM 11309 / KCTC 3954 / HTE831).